The chain runs to 120 residues: Ribosomal protein eL22-like 1 (120 aa).

This sequence belongs to the eukaryotic ribosomal protein eL22 family.

This is Ribosomal protein eL22-like 1 (rpl22l1) from Xenopus tropicalis (Western clawed frog).